A 58-amino-acid polypeptide reads, in one-letter code: Parvalbumin beta 3 (58 aa).

At alanine 1 the chain carries N-acetylalanine. The region spanning 24–58 (FNYKTFFKFFAIIDQDHSGFIEEEELKALSDAETK) is the EF-hand domain. Ca(2+) is bound by residues aspartate 37, aspartate 39, serine 41, phenylalanine 43, glutamate 45, and glutamate 48.

The protein belongs to the parvalbumin family.

Its function is as follows. In muscle, parvalbumin is thought to be involved in relaxation after contraction. It binds two calcium ions. The protein is Parvalbumin beta 3 of Merluccius senegalensis (Senegalese hake).